Consider the following 427-residue polypeptide: MESLTLQPIARVDGTINLPGSKSVSNRALLLAALAHGKTVLTNLLDSDDVRHMLNALTGLGVSYTLSADRTRCEIIGNGGPLHAEGALELFLGNAGTAMRPLAAALCLGSNDIVLTGEPRMKERPIGHLVDALRLGGAKITYLEQENYPPLRLQGGFTGGNVDVDGSVSSQFLTALLMTAPLAPEDTVIRIKGDLVSKPYIDITLNLMKTFGVEIENQHYQQFVVKGGQSYQSPGTYLVEGDASSASYFLAAAAIKGGTVKVTGIGRNSMQGDIRFADVLEKMGATICWGDDYISCTRGELNAIDMDMNHIPDAAMTIATAALFAKGTTTLRNIYNWRVKETDRLFAMATELRKVGAEVEEGHDYIRITPPEKLNFAEIATYNDHRMAMCFSLVALSDTPVTILDPKCTAKTFPDYFEQLARISQAA.

Residues Lys22, Ser23, and Arg27 each coordinate 3-phosphoshikimate. Lys22 contributes to the phosphoenolpyruvate binding site. The phosphoenolpyruvate site is built by Gly96 and Arg124. 3-phosphoshikimate contacts are provided by Ser169, Ser170, Gln171, Ser197, Asp313, Asn336, and Lys340. Phosphoenolpyruvate is bound at residue Gln171. Asp313 functions as the Proton acceptor in the catalytic mechanism. Residues Arg344, Arg386, and Lys411 each contribute to the phosphoenolpyruvate site.

This sequence belongs to the EPSP synthase family. In terms of assembly, monomer.

The protein resides in the cytoplasm. It catalyses the reaction 3-phosphoshikimate + phosphoenolpyruvate = 5-O-(1-carboxyvinyl)-3-phosphoshikimate + phosphate. The protein operates within metabolic intermediate biosynthesis; chorismate biosynthesis; chorismate from D-erythrose 4-phosphate and phosphoenolpyruvate: step 6/7. Its function is as follows. Catalyzes the transfer of the enolpyruvyl moiety of phosphoenolpyruvate (PEP) to the 5-hydroxyl of shikimate-3-phosphate (S3P) to produce enolpyruvyl shikimate-3-phosphate and inorganic phosphate. This is 3-phosphoshikimate 1-carboxyvinyltransferase from Escherichia coli O9:H4 (strain HS).